The following is a 318-amino-acid chain: Taste receptor type 2 member 14 (318 aa).

Residues 1 to 7 (MGGVIKN) lie on the Extracellular side of the membrane. The chain crosses the membrane as a helical span at residues 8 to 28 (ISTFVLIVEFIIGNLGNSFIA). Residues 29–55 (LVNCIDWVKRRKISLVDQLLTALAISR) lie on the Cytoplasmic side of the membrane. The chain crosses the membrane as a helical span at residues 56–76 (ISLVWLIFGSWCVSAFFPALF). Residues 77-87 (ATEKMFRMLTN) lie on the Extracellular side of the membrane. Residues Thr86 and Trp89 each coordinate cholesterol. The helical transmembrane segment at 88–108 (IWAVTNHFSVWLATGLGTFYF) threads the bilayer. The Cytoplasmic segment spans residues 109-129 (LKIANFSNSIFIYLKWRVKKV). Residues 130 to 150 (VLVLLLVTSVFLFLNIALINI) traverse the membrane as a helical segment. The Extracellular segment spans residues 151 to 184 (HINASINGYGGNKTCSSDSNDFTRFSSLIALTSS). Asn153 and Asn162 each carry an N-linked (GlcNAc...) asparagine glycan. Position 180 (Ala180) interacts with cholesterol. A helical membrane pass occupies residues 185 to 205 (VFIFIPFILSLAIFLLLTFSL). Residues 206–232 (WKHCKKMQHTVKASGDASTKAHRGVMQ) are Cytoplasmic-facing. A helical transmembrane segment spans residues 233 to 253 (TVIAFLLLYPIFSLSFFIAVW). Residues 254–261 (TSGWLEEN) lie on the Extracellular side of the membrane. Residues 262-282 (LIILSQVMGMAYPSCHSCILI) form a helical membrane-spanning segment. The cholesterol site is built by Leu265 and Val268. Residues 283–317 (LGNKKLRQASLSVLWWLKYRFKDGEPSGHKGFRES) lie on the Cytoplasmic side of the membrane.

Belongs to the G-protein coupled receptor T2R family. In terms of assembly, core component of the TAS2R14-GNAI1 complex, consisting of TAS2R14, GNAI1, GNB1 and GNG2; within the complex interacts with GNAI1. Core component of the TAS2R14-GNAT3 complex, consisting of TAS2R14, GNAT3, GNB1 and GNG2; within the complex interacts with GNAT3. Core component of the TAS2R14-GNAS2 complex, consisting of TAS2R14, GNAS2, GNB1 and GNG2; within the complex interacts with GNAS2.

It localises to the membrane. It catalyses the reaction Ca(2+)(in) = Ca(2+)(out). It carries out the reaction 3',5'-cyclic AMP(in) = 3',5'-cyclic AMP(out). Its activity is regulated as follows. Basal activity is enhanced by binding to bitter tastants, such as flufenamic acid and aristolochic acid. Regulated by cholesterol in a concentration-dependent manner. Functionally, gustducin-linked G-protein coupled receptor that plays a role in the perception of bitterness. The activity of this receptor stimulates GNAT3, activating the gustducin G-protein pathway. Likely plays a role in sensing the chemical composition of the gastrointestinal content and other extra-oral tissues via the inhibitory G-protein pathways. The sequence is that of Taste receptor type 2 member 14 (TAS2R14) from Pongo pygmaeus (Bornean orangutan).